A 247-amino-acid chain; its full sequence is MNAVILIPARLDSSRLPKKMLADLDGEPLIVRTWRQALLSNHAVRVVVATDSPEIAGALEAYGAEVMMTSPHARCGTERIAEAARSIDADVFLNLQGDEPLIDPRNIDLCLEPFLADNPPDCSTLVYPLLPEDFQQIDDPNVVKVVLDRNGNALYFSRSPVPFQREVYAATQFYRHIGLYAFSAEVLQHYASLPPSMLEKAESLEQLRLLENGFSIRCVTTTVDHPGVNTPEDLDLVRRMLRRSAGR.

It belongs to the KdsB family.

Its subcellular location is the cytoplasm. It carries out the reaction 3-deoxy-alpha-D-manno-oct-2-ulosonate + CTP = CMP-3-deoxy-beta-D-manno-octulosonate + diphosphate. It participates in nucleotide-sugar biosynthesis; CMP-3-deoxy-D-manno-octulosonate biosynthesis; CMP-3-deoxy-D-manno-octulosonate from 3-deoxy-D-manno-octulosonate and CTP: step 1/1. The protein operates within bacterial outer membrane biogenesis; lipopolysaccharide biosynthesis. Activates KDO (a required 8-carbon sugar) for incorporation into bacterial lipopolysaccharide in Gram-negative bacteria. The protein is 3-deoxy-manno-octulosonate cytidylyltransferase of Chlorobium limicola (strain DSM 245 / NBRC 103803 / 6330).